We begin with the raw amino-acid sequence, 414 residues long: Alanine--glyoxylate aminotransferase (414 aa).

Residues 1–23 (MFQALAKASAALGPRAAGWVRTM) constitute a mitochondrion transit peptide. K231 carries the post-translational modification N6-(pyridoxal phosphate)lysine. K256 and K334 each carry N6-acetyllysine. Position 382 (R382) interacts with substrate.

This sequence belongs to the class-V pyridoxal-phosphate-dependent aminotransferase family. In terms of assembly, homodimer. Requires pyridoxal 5'-phosphate as cofactor.

Its subcellular location is the peroxisome. It is found in the mitochondrion matrix. The enzyme catalyses L-serine + pyruvate = 3-hydroxypyruvate + L-alanine. It carries out the reaction glyoxylate + L-alanine = glycine + pyruvate. Its function is as follows. Catalyzes the transamination of glyoxylate to glycine and contributes to the glyoxylate detoxification. In terms of biological role, catalyzes the transamination between L-serine and pyruvate and weakly contributes to gluconeogenesis from the L-serine metabolism. The protein is Alanine--glyoxylate aminotransferase of Callithrix jacchus (White-tufted-ear marmoset).